Reading from the N-terminus, the 288-residue chain is Shikimate kinase (288 aa).

81–91 contributes to the ATP binding site; the sequence is PVASGLKSSSA.

Belongs to the GHMP kinase family. Archaeal shikimate kinase subfamily.

It is found in the cytoplasm. It catalyses the reaction shikimate + ATP = 3-phosphoshikimate + ADP + H(+). The protein operates within metabolic intermediate biosynthesis; chorismate biosynthesis; chorismate from D-erythrose 4-phosphate and phosphoenolpyruvate: step 5/7. The protein is Shikimate kinase of Methanothrix thermoacetophila (strain DSM 6194 / JCM 14653 / NBRC 101360 / PT) (Methanosaeta thermophila).